The chain runs to 65 residues: Conotoxin Lt5.1 (65 aa).

The N-terminal stretch at 1–19 (MRCLPVFIILLLLIPSAPS) is a signal peptide. Positions 20 to 48 (VDAQRKTKDDVPLASFHDNAKRTLKRLWN) are excised as a propeptide.

The protein belongs to the conotoxin T superfamily. Contains 2 disulfide bonds that can be either 'C1-C3, C2-C4' or 'C1-C4, C2-C3', since these disulfide connectivities have been observed for conotoxins with cysteine framework V (for examples, see AC P0DQQ7 and AC P81755). In terms of tissue distribution, expressed by the venom duct.

The protein localises to the secreted. This Conus litteratus (Lettered cone) protein is Conotoxin Lt5.1.